The chain runs to 245 residues: MDGWQRAFVLHSRPWSETSLMLDVFTEESGRVRLVAKGARSKRSNLKGALQPFTPLLVRFGGRGEVKTLRSAEAVSLALPLSGITLYSGLYVNELISRVLEHETRFSELFFDYLHCIQALAGTSGSPEPALRRFELALLGHLGYGVDFLHCAGSGEPVDDTMTYRYREEKGFIASLVIDNNTFTGHHLKALASREFPDVDTLRAAKRFTRIALKPYLGGKPLKSRELFRQFMPARKARADNTNND.

It belongs to the RecO family.

Involved in DNA repair and RecF pathway recombination. This is DNA repair protein RecO from Klebsiella pneumoniae (strain 342).